We begin with the raw amino-acid sequence, 93 residues long: UPF0223 protein YfdD (93 aa).

The protein belongs to the UPF0223 family.

This Lactococcus lactis subsp. lactis (strain IL1403) (Streptococcus lactis) protein is UPF0223 protein YfdD (yfdD).